The sequence spans 598 residues: MFS transporter L2 (598 aa).

A run of 3 helical transmembrane segments spans residues 83 to 103, 122 to 142, and 150 to 170; these read IAAF…ATSI, FWAG…LGSF, and SLIY…AVAN. Residue Asn171 is glycosylated (N-linked (GlcNAc...) asparagine). 5 helical membrane passes run 183–203, 212–232, 239–259, 277–297, and 309–329; these read GVGG…TVPL, FFGM…GAFA, WVFW…TVFL, WIGM…ITWG, and LVPL…QEKF. Asn342 carries an N-linked (GlcNAc...) asparagine glycan. The next 6 membrane-spanning stretches (helical) occupy residues 346–366, 383–403, 411–431, 439–459, 476–496, and 550–570; these read ALLY…LYFM, VALF…GIAI, WANW…ILLK, WIFL…AMAL, MFSF…GVVF, and YIWI…LFID.

This sequence belongs to the major facilitator superfamily.

The protein resides in the membrane. MFS transporter; part of the gene cluster that mediates the biosynthesis of squalestatin S1 (SQS1, also known as zaragozic acid A), a lead compound for the treatment of hyper-cholesterolemia by targeting squalene synthase (SS). This chain is MFS transporter L2, found in Phoma sp. (strain ATCC 20986 / MF5453).